The sequence spans 246 residues: Complement C1q tumor necrosis factor-related protein 3 (246 aa).

The first 22 residues, 1–22 (MLGRQRIWWHLLPLLFLPFCLC), serve as a signal peptide directing secretion. The 63-residue stretch at 51–113 (GYQGPPGPPG…KGEKGYPGVP (63 aa)) folds into the Collagen-like domain. Residues 53–112 (QGPPGPPGPPGIPGNHGNNGNNGATGHEGAKGEKGDKGDLGPRGERGQHGPKGEKGYPGV) form a disordered region. Residues 55–64 (PPGPPGPPGI) are compositionally biased toward pro residues. Residues 65-74 (PGNHGNNGNN) are compositionally biased toward low complexity. A compositionally biased stretch (basic and acidic residues) spans 80–107 (EGAKGEKGDKGDLGPRGERGQHGPKGEK). Positions 113–246 (PPELQIAFMA…FAGFLLFETK (134 aa)) constitute a C1q domain.

The protein resides in the secreted. This chain is Complement C1q tumor necrosis factor-related protein 3 (C1qtnf3), found in Mus musculus (Mouse).